The sequence spans 387 residues: Glucose-1-phosphate adenylyltransferase (387 aa).

Alpha-D-glucose 1-phosphate-binding positions include Tyr-99, Gly-164, 179–180, and Ser-190; that span reads EK.

Belongs to the bacterial/plant glucose-1-phosphate adenylyltransferase family. In terms of assembly, homotetramer.

It carries out the reaction alpha-D-glucose 1-phosphate + ATP + H(+) = ADP-alpha-D-glucose + diphosphate. The protein operates within glycan biosynthesis; glycogen biosynthesis. In terms of biological role, involved in the biosynthesis of ADP-glucose, a building block required for the elongation reactions to produce glycogen. Catalyzes the reaction between ATP and alpha-D-glucose 1-phosphate (G1P) to produce pyrophosphate and ADP-Glc. This chain is Glucose-1-phosphate adenylyltransferase, found in Geobacillus stearothermophilus (Bacillus stearothermophilus).